The chain runs to 1866 residues: Nucleoporin Nup188 (1866 aa).

This sequence belongs to the Nup188 family. In terms of assembly, part of the nuclear pore complex (NPC).

It is found in the nucleus. The protein localises to the nuclear pore complex. Functionally, component of the nuclear pore complex (NPC), a complex required for the trafficking across the nuclear envelope. Required for proper protein transport into the nucleus. This is Nucleoporin Nup188 from Drosophila melanogaster (Fruit fly).